The following is a 294-amino-acid chain: Acetylglutamate kinase (294 aa).

Substrate-binding positions include 64–65 (GG), R86, and N189.

Belongs to the acetylglutamate kinase family. ArgB subfamily.

The protein localises to the cytoplasm. It catalyses the reaction N-acetyl-L-glutamate + ATP = N-acetyl-L-glutamyl 5-phosphate + ADP. The protein operates within amino-acid biosynthesis; L-arginine biosynthesis; N(2)-acetyl-L-ornithine from L-glutamate: step 2/4. In terms of biological role, catalyzes the ATP-dependent phosphorylation of N-acetyl-L-glutamate. This Carboxydothermus hydrogenoformans (strain ATCC BAA-161 / DSM 6008 / Z-2901) protein is Acetylglutamate kinase.